A 445-amino-acid chain; its full sequence is StAR-related lipid transfer protein 3 (445 aa).

The Cytoplasmic segment spans residues 1-51 (MSKLPGELARDLECSLPAVASLGSSLSHSQSLSSHLLPPPEKRRAISDVRR). The MENTAL domain occupies 46 to 217 (ISDVRRTFCL…YSPPESFAGS (172 aa)). The chain crosses the membrane as a helical span at residues 52 to 72 (TFCLFVTFDLLFISLLWIIEL). The Extracellular segment spans residues 73–94 (NTNTGIRKNLEQEIIQYNFKTS). The helical transmembrane segment at 95 to 115 (FFDIFVLAFFRFSGLLLGYAV) threads the bilayer. The Cytoplasmic portion of the chain corresponds to 116-120 (LRLQH). A helical transmembrane segment spans residues 121 to 141 (WWVIAVTTLVSSAFLIVKVIL). Residues 142–148 (SELLSKG) lie on the Extracellular side of the membrane. The helical transmembrane segment at 149 to 169 (AFGYLLPIVSFVLAWLETWFL) threads the bilayer. The Cytoplasmic portion of the chain corresponds to 170 to 445 (DFKVLPQEAE…QRISELGARA (276 aa)). 2 short sequence motifs (FFAT) span residues 206-212 (QFYSPPE) and 207-212 (FYSPPE). A phosphoserine mark is found at serine 209, serine 217, and serine 221. One can recognise an START domain in the interval 248 to 443 (VVDQILAQEE…LRQRISELGA (196 aa)).

The protein belongs to the STARD3 family. In terms of assembly, homodimer. Interacts (via the MENTAL domain) with STARD3NL. Interacts (via phosphorylated FFAT motif) with VAPA (via MSP domain). Interacts (via phosphorylated FFAT motif) with VAPB (via MSP domain). Interacts (via phosphorylated FFAT motif) with MOSPD2 (via MSP domain); this interaction allows enrichment of MOSPD2 around endosomes. Phosphorylation at Ser-209 is necessary and sufficient for the direct interaction of the phosphorylated FFAT motif with the MSP domain of MOSPD2, VAPA and VAPB and allows the tethering of two membranes that participates in the formation of ER-endosome contacts. Phosphorylation of the FFAT motif leads to conformation changes. Additional phosphorylations around the core FFAT motif (QFYSPPE) are not essential but strengthen the interaction with MOSPD2, VAPA and VAPB. Phosphorylation at Ser-209 of FFAT motif drives membrane tethering between the endoplasmic reticulum and late endosomes via interaction with VAPA and VAPB that in turn allows the efficient transport of sterol mediated by the START domain. In terms of tissue distribution, present in retina. Localizes to all neurons of macular retina and especially cone inner segments and axons (at protein level).

The protein resides in the late endosome membrane. The enzyme catalyses cholesterol(in) = cholesterol(out). Functionally, sterol-binding protein that mediates cholesterol transport from the endoplasmic reticulum to endosomes. The sterol transport mechanism is triggered by phosphorylation of FFAT motif that leads to membrane tethering between the endoplasmic reticulum and late endosomes via interaction with VAPA and VAPB. Acts as a lipid transfer protein that redirects sterol to the endosome at the expense of the cell membrane and favors membrane formation inside endosomes. May also mediate cholesterol transport between other membranes, such as mitochondria membrane or cell membrane. However, such results need additional experimental evidences; probably mainly mediates cholesterol transport from the endoplasmic reticulum to endosomes. Does not activate transcriptional cholesterol sensing. Able to bind other lipids, such as lutein, a xanthophyll carotenoids that form the macular pigment of the retina. Able to bind other lipids, such as lutein, a xanthophyll carotenoids that form the macular pigment of the retina. This chain is StAR-related lipid transfer protein 3, found in Macaca mulatta (Rhesus macaque).